The primary structure comprises 520 residues: Transactivator/viroplasmin protein (520 aa).

Disordered stretches follow at residues 103-126 (SDFL…SVAP) and 487-520 (EDAS…KQVD).

It belongs to the caulimoviridae viroplasmin family.

It localises to the host cytoplasm. Enhances the ribosomal termination-reinitiation event leading to the translation of major open reading frames on the polycistronic viral RNAs. This chain is Transactivator/viroplasmin protein, found in Arabidopsis thaliana (Mouse-ear cress).